A 319-amino-acid polypeptide reads, in one-letter code: Ribonuclease Z (319 aa).

Residues His-62, His-64, Asp-66, His-67, His-145, Asp-215, and His-273 each coordinate Zn(2+). Residue Asp-66 is the Proton acceptor of the active site.

Belongs to the RNase Z family. In terms of assembly, homodimer. The cofactor is Zn(2+).

It catalyses the reaction Endonucleolytic cleavage of RNA, removing extra 3' nucleotides from tRNA precursor, generating 3' termini of tRNAs. A 3'-hydroxy group is left at the tRNA terminus and a 5'-phosphoryl group is left at the trailer molecule.. Functionally, zinc phosphodiesterase, which displays some tRNA 3'-processing endonuclease activity. Probably involved in tRNA maturation, by removing a 3'-trailer from precursor tRNA. The protein is Ribonuclease Z of Borrelia garinii subsp. bavariensis (strain ATCC BAA-2496 / DSM 23469 / PBi) (Borreliella bavariensis).